A 588-amino-acid polypeptide reads, in one-letter code: Calicin (588 aa).

The 71-residue stretch at 28 to 98 folds into the BTB domain; the sequence is WDMALTVDHH…FYSGKVVISE (71 aa). One can recognise a BACK domain in the interval 133 to 235; sequence CLRYLFLAEL…NAVSNKTLMF (103 aa). Ser149 bears the Phosphoserine mark. 6 Kelch repeats span residues 280-327, 328-375, 377-423, 425-475, 476-525, and 526-580; these read SVVI…AAGR, YIYI…TCGG, VYSV…TKGD, NLYI…SFHQ, DNIL…IGDS, and KVFV…LAKL.

As to quaternary structure, interacts with CYLC1; the interaction may be relevant for proper acrosome attachment to the nuclear envelope.

It is found in the cytoplasm. The protein localises to the cytoskeleton. Its subcellular location is the perinuclear theca. It localises to the calyx. Functionally, required for both nuclear and acrosomal shaping during spermiogenesis. This Rattus norvegicus (Rat) protein is Calicin (Ccin).